We begin with the raw amino-acid sequence, 625 residues long: MRILLIHSDYLEYEVKDKALKKPEEISENQKKGRLDEVLAVFMSVEKVDEQNPEEIVKKAVKEIEEVVSQVKTNNIFVYPFAHLSSELGSPDVALRILKEIENELKNKGYNVRRAPFGYYKAFKLSCKGHPLAELSRTIVPGEAKKEEEVPEALKKEEELVSYWYILTPEGELVEVDKFDFSGYENLKKFANYEINKSRLVTEEPPHVKIMLEQELVDYEEGSDPGNLRYYPKGRLIKSLLENYVTDKVIEYGAMEVETPIMYDFEHPALEKYLNRFPARQYVVKSGDKRFFLRFAACFGQFLIKKDATISYRHLPLRMYELTRYSFRREKRGELSGLRRLRAFTMPDMHTVAKNLQQAMEEFKKQYKLSMEVLKGVGLTPEDYEVAIRFTEDFWNENKDFIVDLAGIIGKPVLIEMWKQRFFYFILKFEFNFVDNLDKAAALSTVQIDVENSQRFGITYYDEEGQEKYPLLLHCSPSGAIERVMYAILEKQAKIMKKGKKPMYPLWLSPIQVRIIPVSEKYLDYALYIAGKLEGAKIRADVDDRNERLNKKIREAEKEWIPYIIVVGENEKRMGVITVRKREDNKQYEIQVEDLIKEIRQKTEGFPYKPRPLPPLVSMRPKFRG.

An editing domain region spans residues 1–147 (MRILLIHSDY…TIVPGEAKKE (147 aa)). Residues 206–505 (PHVKIMLEQE…MKKGKKPMYP (300 aa)) form a catalytic region. Residues Cys298, His350, and His474 each contribute to the Zn(2+) site.

The protein belongs to the class-II aminoacyl-tRNA synthetase family. As to quaternary structure, homodimer. Zn(2+) is required as a cofactor.

The protein resides in the cytoplasm. It carries out the reaction tRNA(Thr) + L-threonine + ATP = L-threonyl-tRNA(Thr) + AMP + diphosphate + H(+). Its function is as follows. Catalyzes the attachment of threonine to tRNA(Thr) in a two-step reaction: L-threonine is first activated by ATP to form Thr-AMP and then transferred to the acceptor end of tRNA(Thr). Also edits incorrectly charged L-seryl-tRNA(Thr). This chain is Threonine--tRNA ligase, found in Thermococcus sibiricus (strain DSM 12597 / MM 739).